Here is a 504-residue protein sequence, read N- to C-terminus: Maturase K (504 aa).

This sequence belongs to the intron maturase 2 family. MatK subfamily.

It is found in the plastid. The protein localises to the chloroplast. In terms of biological role, usually encoded in the trnK tRNA gene intron. Probably assists in splicing its own and other chloroplast group II introns. The sequence is that of Maturase K from Adenostoma fasciculatum (Chamise).